The chain runs to 152 residues: MSQLCPCGSAVEYSLCCHPYVSGEKVAPDPEHLMRSRYCAFVMQDADYLIKTWHPSCGATALRAELIAGFAHTEWLGLTVFEHCWQDGGNIGFVSFVARFTEGGKTGAIIERSRFLKENGQWYYIDGTRPQFGRNDPCPCGSGKKFKKCCGQ.

The protein belongs to the UPF0225 family.

This chain is UPF0225 protein YchJ, found in Escherichia coli O6:K15:H31 (strain 536 / UPEC).